Consider the following 189-residue polypeptide: Molybdopterin synthase catalytic subunit (189 aa).

Residues 1-30 (MSSLEISNSCFSPETRSPSSRQSVEDNASE) show a composition bias toward polar residues. The interval 1–41 (MSSLEISNSCFSPETRSPSSRQSVEDNASEPSGKDVDDVQE) is disordered. Residue Ser20 is modified to Phosphoserine. A compositionally biased stretch (basic and acidic residues) spans 32–41 (SGKDVDDVQE). Substrate contacts are provided by residues 143 to 144 (HR), Lys159, and 166 to 168 (KKE).

Belongs to the MoaE family. MOCS2B subfamily. As to quaternary structure, heterotetramer; composed of 2 small (MOCS2A) and 2 large (MOCS2B) subunits.

It is found in the cytoplasm. It localises to the cytosol. The enzyme catalyses 2 [molybdopterin-synthase sulfur-carrier protein]-C-terminal-Gly-aminoethanethioate + cyclic pyranopterin phosphate + H2O = molybdopterin + 2 [molybdopterin-synthase sulfur-carrier protein]-C-terminal Gly-Gly + 2 H(+). It participates in cofactor biosynthesis; molybdopterin biosynthesis. Catalytic subunit of the molybdopterin synthase complex, a complex that catalyzes the conversion of precursor Z into molybdopterin. Acts by mediating the incorporation of 2 sulfur atoms from thiocarboxylated MOCS2A into precursor Z to generate a dithiolene group. The polypeptide is Molybdopterin synthase catalytic subunit (Mus musculus (Mouse)).